A 497-amino-acid chain; its full sequence is Probable cytosol aminopeptidase (497 aa).

Mn(2+) is bound by residues Lys263 and Asp268. The active site involves Lys275. Mn(2+)-binding residues include Asp286, Asp345, and Glu347. Residue Arg349 is part of the active site.

The protein belongs to the peptidase M17 family. It depends on Mn(2+) as a cofactor.

The protein resides in the cytoplasm. It carries out the reaction Release of an N-terminal amino acid, Xaa-|-Yaa-, in which Xaa is preferably Leu, but may be other amino acids including Pro although not Arg or Lys, and Yaa may be Pro. Amino acid amides and methyl esters are also readily hydrolyzed, but rates on arylamides are exceedingly low.. The catalysed reaction is Release of an N-terminal amino acid, preferentially leucine, but not glutamic or aspartic acids.. Functionally, presumably involved in the processing and regular turnover of intracellular proteins. Catalyzes the removal of unsubstituted N-terminal amino acids from various peptides. This Methylorubrum extorquens (strain CM4 / NCIMB 13688) (Methylobacterium extorquens) protein is Probable cytosol aminopeptidase.